Reading from the N-terminus, the 182-residue chain is ADP-ribosylation factor-like protein 3 (182 aa).

Glycine 2 carries the N-myristoyl glycine lipid modification. Residues 24 to 31 (GLDNGGKT), 67 to 71 (DIGGQ), and 126 to 129 (NKQD) each bind GTP.

The protein belongs to the small GTPase superfamily. Arf family.

The protein localises to the golgi apparatus membrane. It is found in the cytoplasm. Its subcellular location is the cytoskeleton. The protein resides in the spindle. It localises to the nucleus. The protein localises to the microtubule organizing center. It is found in the centrosome. Its subcellular location is the cell projection. The protein resides in the cilium. In terms of biological role, small GTP-binding protein which cycles between an inactive GDP-bound and an active GTP-bound form, and the rate of cycling is regulated by guanine nucleotide exchange factors (GEF) and GTPase-activating proteins (GAP). Required for normal cytokinesis and cilia signaling. Required for targeting proteins to the ciliary membrane by releasing myristoylated protein from unc119 cargo adapters into the cilium. The polypeptide is ADP-ribosylation factor-like protein 3 (arl3) (Danio rerio (Zebrafish)).